The sequence spans 397 residues: 2,3-bisphosphoglycerate-independent phosphoglycerate mutase (397 aa).

Belongs to the BPG-independent phosphoglycerate mutase family. A-PGAM subfamily.

It catalyses the reaction (2R)-2-phosphoglycerate = (2R)-3-phosphoglycerate. Its pathway is carbohydrate degradation; glycolysis; pyruvate from D-glyceraldehyde 3-phosphate: step 3/5. Catalyzes the interconversion of 2-phosphoglycerate and 3-phosphoglycerate. This chain is 2,3-bisphosphoglycerate-independent phosphoglycerate mutase (apgM), found in Methanosarcina mazei (strain ATCC BAA-159 / DSM 3647 / Goe1 / Go1 / JCM 11833 / OCM 88) (Methanosarcina frisia).